A 178-amino-acid polypeptide reads, in one-letter code: Large ribosomal subunit protein uL6 (178 aa).

The protein belongs to the universal ribosomal protein uL6 family. In terms of assembly, part of the 50S ribosomal subunit.

Functionally, this protein binds to the 23S rRNA, and is important in its secondary structure. It is located near the subunit interface in the base of the L7/L12 stalk, and near the tRNA binding site of the peptidyltransferase center. This is Large ribosomal subunit protein uL6 from Halalkalibacterium halodurans (strain ATCC BAA-125 / DSM 18197 / FERM 7344 / JCM 9153 / C-125) (Bacillus halodurans).